A 524-amino-acid chain; its full sequence is Butyrophilin subfamily 1 member A1 (524 aa).

The N-terminal stretch at Met-1–Ser-26 is a signal peptide. Over Ala-27–Trp-247 the chain is Extracellular. Ig-like V-type domains are found at residues Pro-29–Lys-141 and Pro-149–Ser-235. Intrachain disulfides connect Cys-51-Cys-125 and Cys-165-Cys-219. 2 N-linked (GlcNAc...) asparagine glycosylation sites follow: Asn-56 and Asn-216. Residues Ile-248 to Phe-268 form a helical membrane-spanning segment. At Thr-269–Pro-524 the chain is on the cytoplasmic side. The B30.2/SPRY domain occupies Ser-286–Pro-480.

The protein belongs to the immunoglobulin superfamily. BTN/MOG family. In terms of assembly, seems to associate with xanthine dehydrogenase/oxidase. N-glycosylated. In terms of tissue distribution, strongly expressed in lactating mammary tissue (at protein level). About 100-fold lower levels in virgin mammary tissue. Also detected in spleen and thymus at 10-20 times lower levels compared to those detected in virgin mammary gland. Very low levels in several other tissues, including brain, heart, kidney, lymph node, lung and small intestine. In the thymus, detected in the stroma, in epithelial cells (at protein level). Most prominent in medullary areas of the thymus and at the corticomedullary junction (at protein level).

It is found in the membrane. Its function is as follows. May function in the secretion of milk-fat droplets. May act as a specific membrane-associated receptor for the association of cytoplasmic droplets with the apical plasma membrane. Inhibits the proliferation of CD4 and CD8 T-cells activated by anti-CD3 antibodies, T-cell metabolism and IL2 and IFNG secretion. The sequence is that of Butyrophilin subfamily 1 member A1 (Btn1a1) from Mus musculus (Mouse).